The primary structure comprises 268 residues: uncharacterized protein (268 aa).

Residues 45–64 (SDTQGPAPGINGQGKPSPGA) form a disordered region.

This is an uncharacterized protein from Aquifex aeolicus (strain VF5).